The sequence spans 259 residues: Type III pantothenate kinase (259 aa).

9–16 is a binding site for ATP; that stretch reads DAGNSRIK. Residues Y93 and 100–103 contribute to the substrate site; that span reads GSDR. D102 (proton acceptor) is an active-site residue. T126 provides a ligand contact to ATP. Position 190 (T190) interacts with substrate.

It belongs to the type III pantothenate kinase family. As to quaternary structure, homodimer. The cofactor is NH4(+). K(+) serves as cofactor.

The protein resides in the cytoplasm. The enzyme catalyses (R)-pantothenate + ATP = (R)-4'-phosphopantothenate + ADP + H(+). The protein operates within cofactor biosynthesis; coenzyme A biosynthesis; CoA from (R)-pantothenate: step 1/5. Its function is as follows. Catalyzes the phosphorylation of pantothenate (Pan), the first step in CoA biosynthesis. The sequence is that of Type III pantothenate kinase from Burkholderia thailandensis (strain ATCC 700388 / DSM 13276 / CCUG 48851 / CIP 106301 / E264).